A 254-amino-acid polypeptide reads, in one-letter code: Phosphoribosylaminoimidazole-succinocarboxamide synthase 1 (254 aa).

It belongs to the SAICAR synthetase family.

The catalysed reaction is 5-amino-1-(5-phospho-D-ribosyl)imidazole-4-carboxylate + L-aspartate + ATP = (2S)-2-[5-amino-1-(5-phospho-beta-D-ribosyl)imidazole-4-carboxamido]succinate + ADP + phosphate + 2 H(+). It participates in purine metabolism; IMP biosynthesis via de novo pathway; 5-amino-1-(5-phospho-D-ribosyl)imidazole-4-carboxamide from 5-amino-1-(5-phospho-D-ribosyl)imidazole-4-carboxylate: step 1/2. The polypeptide is Phosphoribosylaminoimidazole-succinocarboxamide synthase 1 (purC1) (Agrobacterium fabrum (strain C58 / ATCC 33970) (Agrobacterium tumefaciens (strain C58))).